The primary structure comprises 203 residues: LexA repressor (203 aa).

Positions 28–48 (VRELCDELGFKSPNTAHFHLK) form a DNA-binding region, H-T-H motif. Catalysis depends on for autocatalytic cleavage activity residues Ser122 and Lys159.

Belongs to the peptidase S24 family. Homodimer.

The enzyme catalyses Hydrolysis of Ala-|-Gly bond in repressor LexA.. Its function is as follows. Represses a number of genes involved in the response to DNA damage (SOS response), including recA and lexA. In the presence of single-stranded DNA, RecA interacts with LexA causing an autocatalytic cleavage which disrupts the DNA-binding part of LexA, leading to derepression of the SOS regulon and eventually DNA repair. The chain is LexA repressor from Desulfatibacillum aliphaticivorans.